The chain runs to 479 residues: Nucleoside-diphosphatase uda-1 (479 aa).

At 1-7 (MLFPAFS) the chain is on the cytoplasmic side. A helical; Signal-anchor for type II membrane protein membrane pass occupies residues 8 to 24 (ILLISFFSLLSVVTTKT). Residues 25 to 479 (QYWCHGDGVL…VLSYFNIISV (455 aa)) lie on the Lumenal side of the membrane. Glutamate 171 (proton acceptor) is an active-site residue. Asparagine 300 and asparagine 452 each carry an N-linked (GlcNAc...) asparagine glycan.

This sequence belongs to the GDA1/CD39 NTPase family. Ca(2+) is required as a cofactor. The cofactor is Mg(2+). Requires Mn(2+) as cofactor.

Its subcellular location is the endomembrane system. The enzyme catalyses a ribonucleoside 5'-diphosphate + H2O = a ribonucleoside 5'-phosphate + phosphate + H(+). In terms of biological role, hydrolyzes UDP and GDP but not any other nucleoside di-, mono- or triphosphates. May promote reglycosylation reactions involved in glycoproteins folding and quality control in the endoplasmic reticulum. In Caenorhabditis elegans, this protein is Nucleoside-diphosphatase uda-1 (uda-1).